The chain runs to 172 residues: Interferon tau-3 (172 aa).

2 cysteine pairs are disulfide-bonded: Cys-1–Cys-99 and Cys-29–Cys-139.

This sequence belongs to the alpha/beta interferon family. IFN-alphaII subfamily. Constitutively and exclusively expressed in the mononuclear cells of the extraembryonic trophectoderm.

The protein localises to the secreted. In terms of biological role, paracrine hormone primarily responsible for maternal recognition of pregnancy. Interacts with endometrial receptors, probably type I interferon receptors, and blocks estrogen receptor expression, preventing the estrogen-induced increase in oxytocin receptor expression in the endometrium. This results in the suppression of the pulsatile endometrial release of the luteolytic hormone prostaglandin F2-alpha, hindering the regression of the corpus luteum (luteolysis) and therefore a return to ovarian cyclicity. This, and a possible direct effect of IFN-tau on prostaglandin synthesis, leads in turn to continued ovarian progesterone secretion, which stimulates the secretion by the endometrium of the nutrients required for the growth of the conceptus. In summary, displays particularly high antiviral and antiproliferative potency concurrently with particular weak cytotoxicity, high antiluteolytic activity and immunomodulatory properties. In contrast with other IFNs, IFN-tau is not virally inducible. This is Interferon tau-3 (IFNT3) from Ovis aries (Sheep).